Consider the following 127-residue polypeptide: Glycine cleavage system H protein (127 aa).

In terms of domain architecture, Lipoyl-binding spans 24-105 (TVKVGISDHA…PYEAWLFAVR (82 aa)). Lysine 65 is modified (N6-lipoyllysine).

This sequence belongs to the GcvH family. In terms of assembly, the glycine cleavage system is composed of four proteins: P, T, L and H. (R)-lipoate is required as a cofactor.

Functionally, the glycine cleavage system catalyzes the degradation of glycine. The H protein shuttles the methylamine group of glycine from the P protein to the T protein. This is Glycine cleavage system H protein from Methylococcus capsulatus (strain ATCC 33009 / NCIMB 11132 / Bath).